The sequence spans 72 residues: Bowman-Birk type proteinase inhibitor 2a (72 aa).

7 cysteine pairs are disulfide-bonded: Cys8/Cys61, Cys9/Cys24, Cys12/Cys57, Cys14/Cys22, Cys31/Cys38, Cys35/Cys50, and Cys40/Cys48.

In terms of assembly, dimer.

Its function is as follows. Inhibits trypsin (IC(50)=0.9 nM) and alpha-chymotrypsin (IC(50)=1.1 nM). This is Bowman-Birk type proteinase inhibitor 2a from Lathyrus sativus (White vetchling).